A 143-amino-acid chain; its full sequence is Transcriptional regulator MraZ (143 aa).

2 SpoVT-AbrB domains span residues 5-47 (EYEH…TLEE) and 76-119 (AIEV…DRET).

It belongs to the MraZ family. As to quaternary structure, forms oligomers.

It localises to the cytoplasm. It is found in the nucleoid. In Staphylococcus haemolyticus (strain JCSC1435), this protein is Transcriptional regulator MraZ.